The primary structure comprises 271 residues: RELT-like protein 1 (271 aa).

The signal sequence occupies residues 1–23 (MAPRGLPGSAVLAAAVFVGGAVS). Residues 24-57 (SPLVRSDHSGSHPLPSKTETTPSPTNNNGNGHPE) lie on the Extracellular side of the membrane. The tract at residues 27–52 (VRSDHSGSHPLPSKTETTPSPTNNNG) is disordered. Residues 36–52 (PLPSKTETTPSPTNNNG) show a composition bias toward low complexity. Residues 58–78 (YIAYALVPVFFVMGLFGVLIC) traverse the membrane as a helical segment. At 79-271 (HLLKKKGYRC…PVKRQQSDSE (193 aa)) the chain is on the cytoplasmic side. Serine 109 and serine 114 each carry phosphoserine. Disordered regions lie at residues 144–168 (CDPESPVTPSTPGSPPVSPGPLSPG) and 231–271 (TKVE…SDSE). Residues 155-165 (PGSPPVSPGPL) show a composition bias toward pro residues. The segment covering 231-244 (TKVEPKSNQKERRS) has biased composition (basic and acidic residues). A phosphoserine mark is found at serine 244 and serine 247.

The protein belongs to the RELT family. As to quaternary structure, interacts with RELT, RELL2, OXSR1 and PLSCR1.

It localises to the cell membrane. Induces activation of MAPK14/p38 cascade, when overexpressed. Induces apoptosis, when overexpressed. This Bos taurus (Bovine) protein is RELT-like protein 1 (RELL1).